The following is a 426-amino-acid chain: Phosphomethylpyrimidine synthase (426 aa).

Residues asparagine 65, methionine 94, tyrosine 123, histidine 162, 184 to 186 (SRG), 225 to 228 (DGMR), and glutamate 264 contribute to the substrate site. Histidine 268 contacts Zn(2+). Tyrosine 291 is a binding site for substrate. Histidine 332 contacts Zn(2+). [4Fe-4S] cluster is bound by residues cysteine 408, cysteine 411, and cysteine 415.

The protein belongs to the ThiC family. It depends on [4Fe-4S] cluster as a cofactor.

The enzyme catalyses 5-amino-1-(5-phospho-beta-D-ribosyl)imidazole + S-adenosyl-L-methionine = 4-amino-2-methyl-5-(phosphooxymethyl)pyrimidine + CO + 5'-deoxyadenosine + formate + L-methionine + 3 H(+). It functions in the pathway cofactor biosynthesis; thiamine diphosphate biosynthesis. Catalyzes the synthesis of the hydroxymethylpyrimidine phosphate (HMP-P) moiety of thiamine from aminoimidazole ribotide (AIR) in a radical S-adenosyl-L-methionine (SAM)-dependent reaction. The polypeptide is Phosphomethylpyrimidine synthase (Methanococcus maripaludis (strain C5 / ATCC BAA-1333)).